Reading from the N-terminus, the 92-residue chain is Small ribosomal subunit protein uS19 (92 aa).

This sequence belongs to the universal ribosomal protein uS19 family.

Functionally, protein S19 forms a complex with S13 that binds strongly to the 16S ribosomal RNA. This is Small ribosomal subunit protein uS19 from Beijerinckia indica subsp. indica (strain ATCC 9039 / DSM 1715 / NCIMB 8712).